Reading from the N-terminus, the 258-residue chain is HTH-type transcriptional repressor GlcR (258 aa).

Residues 3-58 enclose the HTH deoR-type domain; the sequence is QEERLVAILDFLKQHNRITTEQICTLLQVSRDTARRDLVKLEEQNAIIRTRGGAIL. A DNA-binding region (H-T-H motif) is located at residues 20-39; that stretch reads ITTEQICTLLQVSRDTARRD.

Plays a role in carbon catabolite repression (CCR). Specifically required for transcriptional repression of the levanase operon by glucose but not by other sugars. The chain is HTH-type transcriptional repressor GlcR (glcR) from Bacillus subtilis (strain 168).